We begin with the raw amino-acid sequence, 73 residues long: Sec-independent protein translocase protein TatA (73 aa).

A helical transmembrane segment spans residues 1–21 (MGLSWQQLLILLLVVVVIFGT).

It belongs to the TatA/E family. As to quaternary structure, the Tat system comprises two distinct complexes: a TatABC complex, containing multiple copies of TatA, TatB and TatC subunits, and a separate TatA complex, containing only TatA subunits. Substrates initially bind to the TatABC complex, which probably triggers association of the separate TatA complex to form the active translocon.

It is found in the cell inner membrane. Part of the twin-arginine translocation (Tat) system that transports large folded proteins containing a characteristic twin-arginine motif in their signal peptide across membranes. TatA could form the protein-conducting channel of the Tat system. This chain is Sec-independent protein translocase protein TatA, found in Histophilus somni (strain 129Pt) (Haemophilus somnus).